The following is a 178-amino-acid chain: Neuroblastoma suppressor of tumorigenicity 1 (178 aa).

Positions 1–16 (MLWVLVGTVLPVMLLA) are cleaved as a signal peptide. Cystine bridges form between Cys-34-Cys-84, Cys-48-Cys-98, Cys-58-Cys-117, Cys-62-Cys-119, and Cys-81-Cys-122. Residues 34–123 (CEAKNITQIV…IVHCSCQACG (90 aa)) form the CTCK domain. Residues 130-178 (GLNVYMQGEDGPGSQPGSHSHSHPHPGCQTPEPEEPPGAPQVEEEGAED) form a disordered region.

This sequence belongs to the DAN family. As to quaternary structure, homodimer. In terms of tissue distribution, most abundant in lung, brain, intestine and kidney.

The protein resides in the secreted. Functionally, possible candidate as a tumor suppressor gene of neuroblastoma. May play an important role in preventing cells from entering the final stage (G1/S) of the transformation process. The polypeptide is Neuroblastoma suppressor of tumorigenicity 1 (Nbl1) (Rattus norvegicus (Rat)).